Reading from the N-terminus, the 1809-residue chain is Proprotein convertase subtilisin/kexin type 5 (1809 aa).

An N-terminal signal peptide occupies residues 1–34 (MDWGWGSRCCRPGRRDLLCVLALLAGCLLPVCRT). A propeptide spanning residues 35–116 (RVYTNHWAVK…QQVVKKRTKR (82 aa)) is cleaved from the precursor. At 117–1700 (DYDLSRAQST…DTVFHEHTKT (1584 aa)) the chain is on the extracellular side. One can recognise a Peptidase S8 domain in the interval 136-455 (MWYMHCSDNT…FGLMDAEAMV (320 aa)). Catalysis depends on charge relay system residues D173 and H214. Residues N227 and N383 are each glycosylated (N-linked (GlcNAc...) asparagine). Catalysis depends on S388, which acts as the Charge relay system. Positions 463–603 (TVPQQHVCVE…SLVLYGTSVQ (141 aa)) constitute a P/Homo B domain. Positions 521-523 (RGD) match the Cell attachment site motif. 21 FU repeats span residues 632-682 (EDYA…GHFH), 685-732 (KKRC…GSYQ), 736-779 (KNIC…GQFF), 781-826 (GHDC…SYYL), 834-881 (YKSC…GEYI), 884-929 (QGHC…WKFE), 931-964 (KKQC…QDSE), 965-1010 (YGEC…KTFG), 1012-1054 (KWEC…GFYG), 1058-1099 (LGEC…PTWP), 1137-1179 (TRQY…GTWL), 1183-1230 (SSSC…GFYA), 1232-1276 (DGVC…KHVA), 1278-1321 (EGVC…NFYP), 1323-1369 (MRQC…GTYK), 1373-1418 (NDEC…IEYW), 1422-1467 (SHRC…GYHT), 1471-1516 (SHQC…GYYG), 1520-1567 (SGRC…HYYA), 1571-1616 (AQTC…GEYR), and 1622-1669 (NFNC…SHPH). Residues 638 to 1685 (CDPECSEVGC…DCQSSTDECI (1048 aa)) are CRM (Cys-rich motif). N667 is a glycosylation site (N-linked (GlcNAc...) asparagine). Residues N754, N804, and N854 are each glycosylated (N-linked (GlcNAc...) asparagine). Residues N1642 and N1664 are each glycosylated (N-linked (GlcNAc...) asparagine). The helical transmembrane segment at 1701-1721 (ALLVTSGAMLLLLLGAAVVVW) threads the bilayer. At 1722–1809 (RKSRSQPVAK…EYDDESYSYQ (88 aa)) the chain is on the cytoplasmic side. 2 AC regions span residues 1757-1776 (VIEY…IVYM) and 1788-1809 (YGLL…YSYQ).

This sequence belongs to the peptidase S8 family. As to expression, expressed in the intestine, brain, adrenal gland, anterior pituitary, thyroid, ovaries, testis and lung. Highest levels are found in the gut, duodenum, jejunum and ileum. Expression is higher in female than in male reproductive organs.

The protein localises to the secreted. Its subcellular location is the endomembrane system. In terms of biological role, serine endoprotease that processes various proproteins by cleavage at paired basic amino acids, recognizing the RXXX[KR]R consensus motif. Likely functions in the constitutive and regulated secretory pathways. Plays an essential role in pregnancy establishment by proteolytic activation of a number of important factors such as BMP2, CALD1 and alpha-integrins. May be responsible for the maturation of gastrointestinal peptides. May be involved in the cellular proliferation of adrenal cortex via the activation of growth factors. This chain is Proprotein convertase subtilisin/kexin type 5 (Pcsk5), found in Rattus norvegicus (Rat).